Here is a 239-residue protein sequence, read N- to C-terminus: MLLHLPLAELEVGHHLYWQIGNLNIHGQVFLSSWIVIGALLAVVVLGTRKMERDPRGVQNLLEFLWDYLRDLARDQIGEKVYRDWLPFIGTLFLFIFVSNWGGALIPWRIVHLPSGELGAPTADINTTVAMALLVSLAFFYAGLSNKGLKFFEYYVEPTPIMLPFKIIEEFTKPLSLSFRLFGNILADELAVAVLASLVPLLVPLPVMLLGLFTSAIQALIFATLAAFYIGEAVHEEAH.

5 helical membrane passes run 27 to 47, 86 to 106, 125 to 145, 190 to 210, and 211 to 231; these read GQVF…VVLG, LPFI…GALI, INTT…AGLS, LAVA…VMLL, and GLFT…FYIG.

It belongs to the ATPase A chain family. F-type ATPases have 2 components, CF(1) - the catalytic core - and CF(0) - the membrane proton channel. CF(1) has five subunits: alpha(3), beta(3), gamma(1), delta(1), epsilon(1). CF(0) has four main subunits: a, b, b' and c.

The protein resides in the cellular thylakoid membrane. Its function is as follows. Key component of the proton channel; it plays a direct role in the translocation of protons across the membrane. The protein is ATP synthase subunit a of Synechococcus sp. (strain RCC307).